Reading from the N-terminus, the 188-residue chain is Elongation factor P (188 aa).

Belongs to the elongation factor P family.

Its subcellular location is the cytoplasm. It functions in the pathway protein biosynthesis; polypeptide chain elongation. Functionally, involved in peptide bond synthesis. Stimulates efficient translation and peptide-bond synthesis on native or reconstituted 70S ribosomes in vitro. Probably functions indirectly by altering the affinity of the ribosome for aminoacyl-tRNA, thus increasing their reactivity as acceptors for peptidyl transferase. This is Elongation factor P from Phytoplasma mali (strain AT).